Reading from the N-terminus, the 367-residue chain is UDP-galactopyranose mutase (367 aa).

Residues F12, E31–K32, N39, and H56–I57 contribute to the FAD site. A UDP-alpha-D-galactose-binding site is contributed by F12. Residues N80, T152, W156, and Y181 each contribute to the UDP-alpha-D-galactose site. Residue D212 to F213 participates in FAD binding. The UDP-alpha-D-galactose site is built by N268, R278, and Y311. An FAD-binding site is contributed by R340. Y346 is a binding site for UDP-alpha-D-galactose. An FAD-binding site is contributed by Y347–V352.

As to quaternary structure, homodimer. It depends on FAD as a cofactor.

It carries out the reaction UDP-alpha-D-galactose = UDP-alpha-D-galactofuranose. The protein operates within bacterial outer membrane biogenesis; lipopolysaccharide biosynthesis. Functionally, catalyzes the interconversion through a 2-keto intermediate of uridine diphosphogalactopyranose (UDP-GalP) into uridine diphosphogalactofuranose (UDP-GalF). The sequence is that of UDP-galactopyranose mutase (glf) from Escherichia coli (strain K12).